Reading from the N-terminus, the 503-residue chain is MAIKAEEISALLRSQIENYESEMSVTDVGTVLQIGDGIALIHGLNDVMAGELVEFHNGVLGLAQNLEESNVGVVILGPYEEISEGDEVKRTGRIMEVPVGEEMIGRVVNPLGQPIDGQGPINATKTRPVEKKATGVMDRKSVDEPLQTGIKAIDALVPIGRGQRELIIGDRQTGKTTVAIDSILNQKDQDTICIYVAIGQKDSTVRANVEKLRQAGALDYTIVVSASAADPAPLLYIAPYSGVTMGEEFMFNGKHVLIVYDDLTKQAAAYRELSLLLRRPPGREAYPGDVFYLHSRLLERAAKLNDDLGGGSITALPIIETQAGDISAYVPTNVISITDGQIFLQSDLFFSGVRPAINAGQSVSRVGGSAQIKAMKKVAGTLRLDLASYRELESFAQFGSDLDEFTAKKLARGERTVEVLKQGQNNPLPVEHQVLIIFALTKGYLDDIPVQDINRFEEEFNHWAESNATELLNEIRETGALPDADKFDSAITEFKKGFNKSEE.

Position 169 to 176 (G169 to T176) interacts with ATP.

Belongs to the ATPase alpha/beta chains family. In terms of assembly, F-type ATPases have 2 components, CF(1) - the catalytic core - and CF(0) - the membrane proton channel. CF(1) has five subunits: alpha(3), beta(3), gamma(1), delta(1), epsilon(1). CF(0) has three main subunits: a(1), b(2) and c(9-12). The alpha and beta chains form an alternating ring which encloses part of the gamma chain. CF(1) is attached to CF(0) by a central stalk formed by the gamma and epsilon chains, while a peripheral stalk is formed by the delta and b chains.

The protein resides in the cell membrane. The catalysed reaction is ATP + H2O + 4 H(+)(in) = ADP + phosphate + 5 H(+)(out). In terms of biological role, produces ATP from ADP in the presence of a proton gradient across the membrane. The alpha chain is a regulatory subunit. The polypeptide is ATP synthase subunit alpha (Staphylococcus epidermidis (strain ATCC 35984 / DSM 28319 / BCRC 17069 / CCUG 31568 / BM 3577 / RP62A)).